Here is a 434-residue protein sequence, read N- to C-terminus: Rubisco accumulation factor 1.1, chloroplastic (434 aa).

Residues methionine 1–lysine 51 constitute a chloroplast transit peptide. Residues isoleucine 65 to leucine 254 form an N-terminal alpha-helix region. Residues valine 273–proline 419 form a C-terminal beta sheet region.

Belongs to the RAF family. Homodimer.

The protein localises to the plastid. It is found in the chloroplast. Required for assembly or stability of RuBisCO. Acts at a postchaperonin step to fold and/or assemble the large subunit (rbcL) into RuBisCO. RAF1 binds first to a rbcL dimer (rbcL(2)), leading to a rbcL(8)-RAF1(4) complex formation. In the next step, RBCS displaces RAF1, thus resulting in holoenzyme formation. The protein is Rubisco accumulation factor 1.1, chloroplastic of Arabidopsis thaliana (Mouse-ear cress).